A 366-amino-acid chain; its full sequence is Mitogen-activated protein kinase 13 (366 aa).

The region spanning 25–308 (YLAPAHVGSG…AAQALAHPFF (284 aa)) is the Protein kinase domain. Residues 31–39 (VGSGAYGAV) and Lys-54 each bind ATP. The Proton acceptor role is filled by Asp-150. Thr-180 carries the phosphothreonine; by MAP2K3, MAP2K4, MAP2K6 and MAP2K7 modification. The short motif at 180–182 (TGY) is the TXY element. Tyr-182 carries the post-translational modification Phosphotyrosine. Ser-350 carries the post-translational modification Phosphoserine.

It belongs to the protein kinase superfamily. CMGC Ser/Thr protein kinase family. MAP kinase subfamily. As to quaternary structure, interacts with MAPK8IP2. Mg(2+) serves as cofactor. In terms of processing, dually phosphorylated on Thr-180 and Tyr-182 by MAP2K3/MKK3, MAP2K4/MKK4, MAP2K6/MKK6 and MAP2K7/MKK7, which activates the enzyme. Dephosphorylated by dual specificity phosphatase DUSP1.

It catalyses the reaction L-seryl-[protein] + ATP = O-phospho-L-seryl-[protein] + ADP + H(+). The enzyme catalyses L-threonyl-[protein] + ATP = O-phospho-L-threonyl-[protein] + ADP + H(+). Its activity is regulated as follows. Activated by phosphorylation on threonine and tyrosine by dual specificity kinases, MAP2K3/MKK3, MAP2K6/MKK6, MAP2K4/MKK4 and MAP2K7/MKK7. Activation by ultraviolet radiation, hyperosmotic shock, anisomycin or by TNF-alpha is mediated by MAP2K3/MKK3. Inhibited by dual specificity phosphatase DUSP1. In terms of biological role, serine/threonine kinase which acts as an essential component of the MAP kinase signal transduction pathway. MAPK13 is one of the four p38 MAPKs which play an important role in the cascades of cellular responses evoked by extracellular stimuli such as pro-inflammatory cytokines or physical stress leading to direct activation of transcription factors such as ELK1 and ATF2. Accordingly, p38 MAPKs phosphorylate a broad range of proteins and it has been estimated that they may have approximately 200 to 300 substrates each. MAPK13 is one of the less studied p38 MAPK isoforms. Some of the targets are downstream kinases such as MAPKAPK2, which are activated through phosphorylation and further phosphorylate additional targets. Plays a role in the regulation of protein translation by phosphorylating and inactivating EEF2K. Involved in cytoskeletal remodeling through phosphorylation of MAPT and STMN1. Mediates UV irradiation induced up-regulation of the gene expression of CXCL14. Plays an important role in the regulation of epidermal keratinocyte differentiation, apoptosis and skin tumor development. Phosphorylates the transcriptional activator MYB in response to stress which leads to rapid MYB degradation via a proteasome-dependent pathway. MAPK13 also phosphorylates and down-regulates PRKD1 during regulation of insulin secretion in pancreatic beta cells. In Mus musculus (Mouse), this protein is Mitogen-activated protein kinase 13 (Mapk13).